An 834-amino-acid chain; its full sequence is Probable receptor-like protein kinase At2g23200 (834 aa).

Residues 1–28 (MENFCFQDSVSLFITIMVLVLLPRLSLS) form the signal peptide. Topologically, residues 29–405 (DTSTYTRPEN…SSSRVHIITG (377 aa)) are extracellular. 10 N-linked (GlcNAc...) asparagine glycosylation sites follow: Asn61, Asn149, Asn221, Asn246, Asn277, Asn289, Asn314, Asn352, Asn361, and Asn394. A helical transmembrane segment spans residues 406–426 (CAVAAAAASALVFSLLFMVFL). At 427 to 834 (KRRRSKKTKP…FSQLKISDAR (408 aa)) the chain is on the cytoplasmic side. Residues 488-761 (FDEQLLIGKG…RDVIWDLEYV (274 aa)) enclose the Protein kinase domain. ATP contacts are provided by residues 494–502 (IGKGGFGYV) and Lys516. Asp613 functions as the Proton acceptor in the catalytic mechanism.

This sequence belongs to the protein kinase superfamily. Ser/Thr protein kinase family.

The protein localises to the membrane. The chain is Probable receptor-like protein kinase At2g23200 from Arabidopsis thaliana (Mouse-ear cress).